A 104-amino-acid polypeptide reads, in one-letter code: Large ribosomal subunit protein uL24 (104 aa).

Positions 82–104 are disordered; the sequence is RVGYRFDENGKKVRVSRRNGKDI. Basic residues predominate over residues 93–104; the sequence is KVRVSRRNGKDI.

It belongs to the universal ribosomal protein uL24 family. Part of the 50S ribosomal subunit.

Its function is as follows. One of two assembly initiator proteins, it binds directly to the 5'-end of the 23S rRNA, where it nucleates assembly of the 50S subunit. In terms of biological role, one of the proteins that surrounds the polypeptide exit tunnel on the outside of the subunit. This is Large ribosomal subunit protein uL24 from Corynebacterium glutamicum (strain R).